A 131-amino-acid polypeptide reads, in one-letter code: Global transcriptional regulator Spx (131 aa).

A disulfide bridge links Cys-10 with Cys-13.

Belongs to the ArsC family. Spx subfamily. As to quaternary structure, interacts with the C-terminal domain of the alpha subunit of the RNAP.

The protein localises to the cytoplasm. Under non-stress conditions, Spx is degraded by ClpXP. Efficient degradation by ClpXP requires the adapter protein SpxH/YjbH. Function, levels and solubility of Spx are affected by SpxH/YjbH aggregation and stress conditions. Its function is as follows. Global transcriptional regulator that plays a key role in stress response and exerts either positive or negative regulation of genes. Acts by interacting with the C-terminal domain of the alpha subunit of the RNA polymerase (RNAP). This interaction can enhance binding of RNAP to the promoter region of target genes and stimulate their transcription, or block interaction of RNAP with activator proteins and repress transcription. In terms of biological role, required for transcription of thioredoxin reductase (trxB). Modulates the expression of icaR, encoding a repressor of the biofilm operon icaADBC. Also controls the transcription of trfA, a gene implicated in cell wall antibiotic resistance, which in turn is required for degradation of MazE antitoxin, the unstable component of the MazEF toxin-antitoxin system, that neutralizes the endoribonuclease activity of MazF toxin. This chain is Global transcriptional regulator Spx, found in Staphylococcus aureus (strain NCTC 8325 / PS 47).